Consider the following 294-residue polypeptide: MFHGSMVALVTPMEADGSVSDASLAELVEFHIQKGTDAIVAVGTTGESATLDFDEHCEVIRKVVDRVAGRIPVIAGTGANSTSEAIELTRCAMQAGADACLLVTPYYNKPTQEGLYLHHKAVAEAVPIPQILYNVPGRTAVDMHNDTVVRLAEISNIVGLKDATGDLDRARDLVARCGGKIDLYSGDDATAMEFLLLGGKGVISVTANVAPAEMHQMCEAAMRGDRAAAEAINARIDLLHRNLFLEANPIPVKWALEQMGLIPPGIRLPLTRLSERFHAPVREALAAAGITLNA.

T45 lines the pyruvate pocket. Catalysis depends on Y133, which acts as the Proton donor/acceptor. The Schiff-base intermediate with substrate role is filled by K161. A pyruvate-binding site is contributed by I203.

Belongs to the DapA family. In terms of assembly, homotetramer; dimer of dimers.

It is found in the cytoplasm. The catalysed reaction is L-aspartate 4-semialdehyde + pyruvate = (2S,4S)-4-hydroxy-2,3,4,5-tetrahydrodipicolinate + H2O + H(+). It functions in the pathway amino-acid biosynthesis; L-lysine biosynthesis via DAP pathway; (S)-tetrahydrodipicolinate from L-aspartate: step 3/4. Catalyzes the condensation of (S)-aspartate-beta-semialdehyde [(S)-ASA] and pyruvate to 4-hydroxy-tetrahydrodipicolinate (HTPA). The protein is 4-hydroxy-tetrahydrodipicolinate synthase of Thioalkalivibrio sulfidiphilus (strain HL-EbGR7).